A 327-amino-acid polypeptide reads, in one-letter code: uncharacterized protein (327 aa).

The 68-residue stretch at 12–79 (KRLDEFLAKE…LKKELDLEIE (68 aa)) folds into the S4 RNA-binding domain. D136 is an active-site residue.

Belongs to the pseudouridine synthase RluA family.

The enzyme catalyses a uridine in RNA = a pseudouridine in RNA. This is an uncharacterized protein from Helicobacter pylori (strain ATCC 700392 / 26695) (Campylobacter pylori).